A 1782-amino-acid chain; its full sequence is Vitellogenin receptor (1782 aa).

Positions methionine 1–valine 18 are cleaved as a signal peptide. At serine 19–asparagine 1663 the chain is on the extracellular side. LDL-receptor class A domains are found at residues lysine 35–aspartate 72, threonine 81–valine 118, and asparagine 122–lysine 157. Disulfide bonds link cysteine 36-cysteine 48, cysteine 43-cysteine 61, cysteine 55-cysteine 71, cysteine 82-cysteine 94, cysteine 89-cysteine 107, and cysteine 101-cysteine 117. A glycan (N-linked (GlcNAc...) asparagine) is linked at asparagine 122. Intrachain disulfides connect cysteine 123/cysteine 134, cysteine 129/cysteine 147, and cysteine 141/cysteine 156. Asparagine 159 carries N-linked (GlcNAc...) asparagine glycosylation. One can recognise an LDL-receptor class A 4 domain in the interval serine 166–threonine 205. 3 cysteine pairs are disulfide-bonded: cysteine 167–cysteine 181, cysteine 176–cysteine 194, and cysteine 188–cysteine 204. Asparagine 208 and asparagine 239 each carry an N-linked (GlcNAc...) asparagine glycan. An EGF-like 1 domain is found at asparagine 208–asparagine 243. Residues aspartate 244–lysine 283 form the EGF-like; calcium-binding domain. Disulfide bonds link cysteine 248–cysteine 258, cysteine 254–cysteine 267, and cysteine 269–cysteine 282. 5 LDL-receptor class B repeats span residues aspartate 327–threonine 374, lysine 375–glutamine 416, glycine 417–asparagine 460, glutamate 461–glutamine 501, and asparagine 502–alanine 544. The EGF-like 2 domain maps to proline 552 to glutamine 588. N-linked (GlcNAc...) asparagine glycans are attached at residues asparagine 702, asparagine 859, asparagine 896, and asparagine 923. The 39-residue stretch at aspartate 889–isoleucine 927 folds into the EGF-like 3 domain. 5 LDL-receptor class A domains span residues glutamate 931–arginine 969, arginine 973–glutamate 1009, lysine 1012–arginine 1049, glutamate 1052–tyrosine 1090, and alanine 1094–leucine 1131. Intrachain disulfides connect cysteine 932–cysteine 945, cysteine 939–cysteine 958, cysteine 952–cysteine 968, cysteine 974–cysteine 986, cysteine 981–cysteine 999, cysteine 993–cysteine 1008, cysteine 1013–cysteine 1026, cysteine 1020–cysteine 1039, cysteine 1033–cysteine 1048, cysteine 1053–cysteine 1065, cysteine 1060–cysteine 1078, cysteine 1072–cysteine 1089, cysteine 1095–cysteine 1108, cysteine 1103–cysteine 1121, and cysteine 1115–cysteine 1130. N-linked (GlcNAc...) asparagine glycans are attached at residues asparagine 1133 and asparagine 1140. LDL-receptor class A domains follow at residues asparagine 1140–threonine 1177, tyrosine 1178–aspartate 1214, and glutamate 1225–glutamine 1260. Disulfide bonds link cysteine 1141–cysteine 1154, cysteine 1148–cysteine 1167, cysteine 1161–cysteine 1176, cysteine 1179–cysteine 1191, cysteine 1186–cysteine 1204, cysteine 1198–cysteine 1213, cysteine 1226–cysteine 1236, cysteine 1231–cysteine 1249, and cysteine 1243–cysteine 1259. A glycan (N-linked (GlcNAc...) asparagine) is linked at asparagine 1175. The EGF-like 4 domain occupies alanine 1262–glutamate 1298. LDL-receptor class B repeat units lie at residues aspartate 1385–threonine 1425, arginine 1471–lysine 1518, and serine 1519–serine 1561. N-linked (GlcNAc...) asparagine glycosylation is found at asparagine 1626, asparagine 1640, and asparagine 1656. The helical transmembrane segment at isoleucine 1664–valine 1684 threads the bilayer. Residues tyrosine 1685–lysine 1782 are Cytoplasmic-facing.

As to expression, expressed in ovaries of reproductive females.

The protein localises to the membrane. In terms of biological role, involved in uptake of vitellogenin by endocytosis. Expression is regulated by the juvenile hormone analog, methoprene (in vitro). In Solenopsis invicta (Red imported fire ant), this protein is Vitellogenin receptor.